The following is a 137-amino-acid chain: DNA-binding protein H-NS (137 aa).

A DNA-binding region spans residues 112–117 (QGRTPA).

Belongs to the histone-like protein H-NS family. As to quaternary structure, homodimer that oligomerizes on DNA into higher-order complexes that form bridges between disparate regions of DNA compacting it. Interacts with Hha, YdgT and StpA.

The protein resides in the cytoplasm. Its subcellular location is the nucleoid. In terms of biological role, a DNA-binding protein implicated in transcriptional repression and chromosome organization and compaction. Binds nucleation sites in AT-rich DNA and bridges them, forming higher-order nucleoprotein complexes and condensing the chromosome. As many horizontally transferred genes are AT-rich, it plays a central role in silencing foreign genes. A subset of genes are repressed by H-NS in association with other proteins. This Salmonella paratyphi A (strain ATCC 9150 / SARB42) protein is DNA-binding protein H-NS (hns).